Consider the following 352-residue polypeptide: 7,8-didemethyl-8-hydroxy-5-deazariboflavin synthase (352 aa).

The Radical SAM core domain occupies 35 to 275 (ITFSKNAFIP…EGISIQVPPN (241 aa)). Cys49, Cys53, and Cys56 together coordinate [4Fe-4S] cluster.

The protein belongs to the radical SAM superfamily. CofG family. Consists of two subunits, CofG and CofH. [4Fe-4S] cluster is required as a cofactor.

The enzyme catalyses 5-amino-5-(4-hydroxybenzyl)-6-(D-ribitylimino)-5,6-dihydrouracil + S-adenosyl-L-methionine = 7,8-didemethyl-8-hydroxy-5-deazariboflavin + 5'-deoxyadenosine + L-methionine + NH4(+) + H(+). Its pathway is cofactor biosynthesis; coenzyme F0 biosynthesis. Its function is as follows. Catalyzes the radical-mediated synthesis of 7,8-didemethyl-8-hydroxy-5-deazariboflavin from 5-amino-5-(4-hydroxybenzyl)-6-(D-ribitylimino)-5,6-dihydrouracil. The protein is 7,8-didemethyl-8-hydroxy-5-deazariboflavin synthase of Methanococcus maripaludis (strain C5 / ATCC BAA-1333).